The chain runs to 182 residues: MKSFLLVVNALALTLPFLAVEVQNQKQPACHENDERPFYQKTAPYVPMYYVPNSYPYYGTNLYQRRPAIAINNPYVPRTYYANPAVVRPHAQIPQRQYLPNSHPPTVVRRPNLHPSFIAIPPKKIQDKIIIPTINTIATVEPTPAPATEPTVDSVVTPEAFSESIITSTPETTTVAVTPPTA.

The first 20 residues, 1-20 (MKSFLLVVNALALTLPFLAV), serve as a signal peptide directing secretion. O-linked (GalNAc...) threonine glycosylation is found at T133, T143, T148, and T151. Position 157 is a phosphothreonine; alternate (T157). The O-linked (GalNAc...) threonine; alternate glycan is linked to T157. O-linked (GalNAc...) threonine glycosylation is found at T167, T169, and T178.

The protein belongs to the kappa-casein family. Heteromultimers composed of alpha-s1 casein and kappa casein linked by disulfide bonds. Post-translationally, the N-terminus is blocked. In terms of tissue distribution, mammary gland specific. Secreted in milk.

The protein localises to the secreted. In terms of biological role, kappa-casein stabilizes micelle formation, preventing casein precipitation in milk. This chain is Kappa-casein (CSN3), found in Homo sapiens (Human).